Consider the following 79-residue polypeptide: UPF0154 protein llmg_1186 (79 aa).

Residues 4–24 form a helical membrane-spanning segment; it reads ILAILLMVVCLLAGFFLGTWF.

This sequence belongs to the UPF0154 family.

Its subcellular location is the cell membrane. The polypeptide is UPF0154 protein llmg_1186 (Lactococcus lactis subsp. cremoris (strain MG1363)).